The sequence spans 494 residues: Tripartite motif-containing protein 5 (494 aa).

N-acetylalanine is present on A2. The RING-type zinc finger occupies 15-59; it reads CPICLELLTEPLSLDCGHSFCQACITANHKESMLHQGERSCPLCR. Residues 91–132 form a B box-type zinc finger; the sequence is QNVDHCARHGEKLLLFCEQDGNIICWLCERSQEHRGHNTFLV. Zn(2+) is bound by residues C96, H99, C118, and H124. The stretch at 132-223 forms a coiled coil; the sequence is VEEVAQKYRE…RLVQSENDMV (92 aa). The interval 186 to 199 is required for interaction with GABARAP and for autophagy; that stretch reads FKQLRDILDCEESN. Residues 280–494 form the B30.2/SPRY domain; the sequence is PDLKRMLQVL…LPMTLCSPSS (215 aa).

It belongs to the TRIM/RBCC family. In terms of assembly, can form homodimers and homotrimers. In addition to lower-order dimerization, also exhibits a higher-order multimerization and both low- and high-order multimerizations are essential for its restriction activity. Interacts with BTBD1 and BTBD2. Interacts with PSMC4, PSMC5, PSMD7 and HSPA8/HSC70. Interacts (via B30.2/SPRY domain) with HSPA1A/B. Interacts with PSMC2, MAP3K7/TAK1, TAB2 and TAB3. Interacts with SQSTM1. Interacts with TRIM6 and TRIM34. Interacts with ULK1 (phosphorylated form), GABARAP, GABARAPL1, GABARAPL2, MAP1LC3A, MAP1LC3C and BECN1. In terms of processing, degraded in a proteasome-independent fashion in the absence of viral infection but in a proteasome-dependent fashion following exposure to restriction sensitive virus. Autoubiquitinated in a RING finger- and UBE2D2-dependent manner. Monoubiquitinated by TRIM21. Deubiquitinated by Yersinia YopJ. Ubiquitination may not lead to proteasomal degradation.

It localises to the cytoplasm. Its subcellular location is the nucleus. The enzyme catalyses S-ubiquitinyl-[E2 ubiquitin-conjugating enzyme]-L-cysteine + [acceptor protein]-L-lysine = [E2 ubiquitin-conjugating enzyme]-L-cysteine + N(6)-ubiquitinyl-[acceptor protein]-L-lysine.. It participates in protein modification; protein ubiquitination. Its function is as follows. Capsid-specific restriction factor that prevents infection from non-host-adapted retroviruses. Blocks viral replication early in the life cycle, after viral entry but before reverse transcription. In addition to acting as a capsid-specific restriction factor, also acts as a pattern recognition receptor that activates innate immune signaling in response to the retroviral capsid lattice. Binding to the viral capsid triggers its E3 ubiquitin ligase activity, and in concert with the heterodimeric ubiquitin conjugating enzyme complex UBE2V1-UBE2N (also known as UBC13-UEV1A complex) generates 'Lys-63'-linked polyubiquitin chains, which in turn are catalysts in the autophosphorylation of the MAP3K7/TAK1 complex (includes TAK1, TAB2, and TAB3). Activation of the MAP3K7/TAK1 complex by autophosphorylation results in the induction and expression of NF-kappa-B and MAPK-responsive inflammatory genes, thereby leading to an innate immune response in the infected cell. Plays a role in regulating autophagy through activation of autophagy regulator BECN1 by causing its dissociation from its inhibitors BCL2 and TAB2. The sequence is that of Tripartite motif-containing protein 5 (TRIM5) from Saimiri boliviensis boliviensis (Bolivian squirrel monkey).